The following is a 267-amino-acid chain: Putative metal-binding protein TM_0123 (267 aa).

A signal peptide spans 1–15 (MKKILLLLVLIVAVL). His-53, His-107, and His-172 together coordinate a divalent metal cation.

This sequence belongs to the bacterial solute-binding protein 9 family.

It localises to the periplasm. In terms of biological role, part of an ATP-binding cassette (ABC) transport system involved in metal import. Binds a metal with high affinity and specificity and delivers it to the membrane permease for translocation into the cytoplasm. The polypeptide is Putative metal-binding protein TM_0123 (Thermotoga maritima (strain ATCC 43589 / DSM 3109 / JCM 10099 / NBRC 100826 / MSB8)).